A 90-amino-acid polypeptide reads, in one-letter code: Large ribosomal subunit protein eL37 (90 aa).

Residues 13–46 (NKSHTLCNRCGRRSFHVQKKTCSSCGYPAAKMRS) form an A20-type zinc finger. 4 residues coordinate Zn(2+): cysteine 19, cysteine 22, cysteine 34, and cysteine 37.

The protein belongs to the eukaryotic ribosomal protein eL37 family. In terms of assembly, component of the large ribosomal subunit. Mature ribosomes consist of a small (40S) and a large (60S) subunit. The 40S subunit contains about 32 different proteins and 1 molecule of RNA (18S). The 60S subunit contains 45 different proteins and 3 molecules of RNA (25S, 5.8S and 5S). Requires Zn(2+) as cofactor.

The protein localises to the cytoplasm. Its function is as follows. Component of the ribosome, a large ribonucleoprotein complex responsible for the synthesis of proteins in the cell. The small ribosomal subunit (SSU) binds messenger RNAs (mRNAs) and translates the encoded message by selecting cognate aminoacyl-transfer RNA (tRNA) molecules. The large subunit (LSU) contains the ribosomal catalytic site termed the peptidyl transferase center (PTC), which catalyzes the formation of peptide bonds, thereby polymerizing the amino acids delivered by tRNAs into a polypeptide chain. The nascent polypeptides leave the ribosome through a tunnel in the LSU and interact with protein factors that function in enzymatic processing, targeting, and the membrane insertion of nascent chains at the exit of the ribosomal tunnel. The polypeptide is Large ribosomal subunit protein eL37 (Candida albicans (strain SC5314 / ATCC MYA-2876) (Yeast)).